Consider the following 106-residue polypeptide: Large ribosomal subunit protein uL24 (106 aa).

The tract at residues 69 to 106 (SNLNPVDPKTGKATRVGRKVSSEGTLVRYSKKSGEEIK) is disordered.

Belongs to the universal ribosomal protein uL24 family. Part of the 50S ribosomal subunit.

Its function is as follows. One of two assembly initiator proteins, it binds directly to the 5'-end of the 23S rRNA, where it nucleates assembly of the 50S subunit. Functionally, one of the proteins that surrounds the polypeptide exit tunnel on the outside of the subunit. This Bacteroides fragilis (strain ATCC 25285 / DSM 2151 / CCUG 4856 / JCM 11019 / LMG 10263 / NCTC 9343 / Onslow / VPI 2553 / EN-2) protein is Large ribosomal subunit protein uL24.